The following is a 497-amino-acid chain: Glutathione hydrolase 6 (497 aa).

A disordered region spans residues 1-34; it reads MDATTGPVHYHKLQLWEPGVESEEEEEEEEEEIA. At 1-51 the chain is on the cytoplasmic side; sequence MDATTGPVHYHKLQLWEPGVESEEEEEEEEEEIAEPLVLSLRRLQNTPRNE. Residues 20–34 show a composition bias toward acidic residues; sequence VESEEEEEEEEEEIA. The helical; Signal-anchor for type II membrane protein transmembrane segment at 52 to 72 threads the bilayer; the sequence is VGGLPGAWARLLAGLLLLAVS. At 73–497 the chain is on the extracellular side; the sequence is SSLALRQLHS…PSGCCPFQGY (425 aa). Asn-164, Asn-169, Asn-367, and Asn-378 each carry an N-linked (GlcNAc...) asparagine glycan.

It belongs to the gamma-glutamyltransferase family. As to quaternary structure, heterodimer composed of the light and heavy chains. The active site is located in the light chain. In terms of processing, cleaved by autocatalysis into a large and a small subunit and the autocatalytic cleavage is essential to the functional activation of the enzyme.

It localises to the membrane. It carries out the reaction an N-terminal (5-L-glutamyl)-[peptide] + an alpha-amino acid = 5-L-glutamyl amino acid + an N-terminal L-alpha-aminoacyl-[peptide]. The catalysed reaction is glutathione + H2O = L-cysteinylglycine + L-glutamate. It catalyses the reaction an S-substituted glutathione + H2O = an S-substituted L-cysteinylglycine + L-glutamate. Its pathway is sulfur metabolism; glutathione metabolism. Functionally, hydrolyzes and transfers gamma-glutamyl moieties from glutathione and other gamma-glutamyl compounds to acceptors. This is Glutathione hydrolase 6 from Mus musculus (Mouse).